The sequence spans 172 residues: Trypsin inhibitor DE-3 (172 aa).

Disulfide bonds link C39–C83 and C132–C139.

The protein belongs to the protease inhibitor I3 (leguminous Kunitz-type inhibitor) family.

Inhibition of trypsin. The sequence is that of Trypsin inhibitor DE-3 from Erythrina variegata (Indian coral tree).